Here is a 108-residue protein sequence, read N- to C-terminus: uncharacterized protein (108 aa).

Residues 1–10 are compositionally biased toward basic and acidic residues; it reads MDMLHNKCSD. Residues 1-27 are disordered; that stretch reads MDMLHNKCSDAIKSTSNSNLSNEVDKQ. The span at 12–22 shows a compositional bias: polar residues; the sequence is IKSTSNSNLSN.

This is an uncharacterized protein from Saccharomyces cerevisiae (strain ATCC 204508 / S288c) (Baker's yeast).